We begin with the raw amino-acid sequence, 376 residues long: Carboxylic ester hydrolase LipN (376 aa).

Residues S216, D316, and H346 contribute to the active site.

Belongs to the 'GDXG' lipolytic enzyme family.

It is found in the cytoplasm. It catalyses the reaction a carboxylic ester + H2O = an alcohol + a carboxylate + H(+). The catalysed reaction is an acetyl ester + H2O = an aliphatic alcohol + acetate + H(+). The enzyme catalyses a butanoate ester + H2O = an aliphatic alcohol + butanoate + H(+). It carries out the reaction an octanoate ester + H2O = an aliphatic alcohol + octanoate + H(+). It catalyses the reaction decanoate ester + H2O = decanoate + an aliphatic alcohol + H(+). The catalysed reaction is a dodecanoate ester + H2O = an aliphatic alcohol + dodecanoate + H(+). The enzyme catalyses 1,2,3-tributanoylglycerol + H2O = dibutanoylglycerol + butanoate + H(+). It carries out the reaction 4-acetoxyphenol + H2O = hydroquinone + acetate + H(+). Completely inhibited by tetrahydrolipstatin (THL), RHC-80267 and N-bromosuccinimide. Non specific carboxylic ester hydrolase. Hydrolyzes various pNP-esters, with a preference for short carbon chain substrates. Can also hydrolyze tributyrin to di- and monobutyrin and 4-hydroxyphenylacetate to hydroquinone. This chain is Carboxylic ester hydrolase LipN, found in Mycobacterium tuberculosis (strain ATCC 25618 / H37Rv).